Consider the following 91-residue polypeptide: Defensin-like protein 82 (91 aa).

Residues 1-27 (MAIKKFSSLLLPLLMVLALVVLPIISG) form the signal peptide. Cystine bridges form between C34–C72, C41–C62, C47–C70, and C51–C71.

It belongs to the DEFL family.

The protein localises to the secreted. The protein is Defensin-like protein 82 of Arabidopsis thaliana (Mouse-ear cress).